The following is a 313-amino-acid chain: Curved DNA-binding protein (313 aa).

The region spanning 5-69 is the J domain; sequence DYYKILGVSR…EKRKAYDAIG (65 aa). A disordered region spans residues 71-93; that stretch reads GWKQGQGFTPPPGWESRPGGEGV.

Its subcellular location is the cytoplasm. The protein resides in the nucleoid. DNA-binding protein that preferentially recognizes a curved DNA sequence. It is probably a functional analog of DnaJ; displays overlapping activities with DnaJ, but functions under different conditions, probably acting as a molecular chaperone in an adaptive response to environmental stresses other than heat shock. Lacks autonomous chaperone activity; binds native substrates and targets them for recognition by DnaK. Its activity is inhibited by the binding of CbpM. The chain is Curved DNA-binding protein from Coxiella burnetii (strain Dugway 5J108-111).